A 196-amino-acid chain; its full sequence is MINIHKRNIVLLVGPSGVGKGTIEKILFESKTLKLSLSRSATTRKKREGEINGIHYFFISKEEFESKIENDEFMEWNEHFDNYYGTLLSEILLIFSQGRIPVLEVETYGAKKILQKYKDKKDFNWITIFVDPPSFEELENRIIKRGTDTKEKIAIRMAKAKEELKDRDLFEFKITNHTPEQAAEEIEKIILKKTMG.

The Guanylate kinase-like domain occupies 7 to 191 (RNIVLLVGPS…AAEEIEKIIL (185 aa)). Position 14–21 (14–21 (GPSGVGKG)) interacts with ATP.

It belongs to the guanylate kinase family.

The protein localises to the cytoplasm. It carries out the reaction GMP + ATP = GDP + ADP. Its function is as follows. Essential for recycling GMP and indirectly, cGMP. In Mycoplasmopsis pulmonis (strain UAB CTIP) (Mycoplasma pulmonis), this protein is Guanylate kinase.